We begin with the raw amino-acid sequence, 744 residues long: Spalt-like protein sem-4 (744 aa).

The disordered stretch occupies residues 6 to 32; the sequence is AEMAAVSSRRKQSKPRRMSGEGDAMMS. Over residues 13-22 the composition is skewed to basic residues; it reads SRRKQSKPRR. 4 C2H2-type zinc fingers span residues 99–124, 305–327, 333–355, and 411–433; these read SSCP…LDAH, NQCI…YRTH, FKCK…MGVH, and QQCP…ITEH. The segment covering 487–497 has biased composition (polar residues); that stretch reads KNDSSPNTDTS. Disordered regions lie at residues 487-530 and 542-562; these read KNDS…RQDI and KLEE…PKNE. Residues 499–509 show a composition bias toward basic and acidic residues; sequence VEEKITRDDPP. Low complexity predominate over residues 513-525; it reads SLSPSNSSDSSSS. Positions 551–561 are enriched in polar residues; the sequence is QQVSTTPNPKN. 3 C2H2-type zinc fingers span residues 589 to 611, 617 to 639, and 701 to 723; these read HQCG…MRTH, FKCD…MGTH, and TVCS…LKEH. Residues 725 to 744 are disordered; the sequence is NNGSSAAPTPLASAATPPPS. Low complexity predominate over residues 728–744; sequence SSAAPTPLASAATPPPS.

Belongs to the sal C2H2-type zinc-finger protein family.

It localises to the nucleus. Transcription factor, involved in positive and negative modulation of transcription. Binds to multiple DNA sequence motifs in the regulatory elements of target genes, including homeobox selector egl-5 and LIM homeobox mec-3. Involved in cell-fate regulation in multiple lineages, including neuronal, mesodermal and vulval. Required to regulate the fate of PLM touch receptor neurons, acting via negative modulation of transcription of egl-5 and mec-3. May modulate gene expression by interacting with different transcription factors during neuronal and mesodermal cell development. Promotes the proliferative sex myoblast (SM) fate, in a cell autonomous manner, acting via the SoxC transcription factor sem-2. Involved in vulval cell-fate determination, acting by regulating expression of homeobox protein lin-39, and may link lin-39 to incoming signaling pathways. Plays a role in detoxification of reactive oxygen species (ROS), by regulating expression of transcription factor skn-1 and the phase II detoxification genes. This is Spalt-like protein sem-4 from Caenorhabditis elegans.